The chain runs to 1018 residues: Serine/threonine-protein kinase 31 (1018 aa).

The Tudor domain occupies 78 to 137 (NLDPKKIYGGLFSEDKCWYRCKVLKTISDDKCLVRYIDYGNTEILNRSDIVEIPPELQFS). Residues 298 to 358 (AKIKQDQKLI…TKHLESTLKT (61 aa)) are a coiled coil. In terms of domain architecture, Protein kinase spans 711-1018 (IGLLKYMNSG…EKTRNGEANP (308 aa)). ATP is bound by residues 717–725 (MNSGGLLTM) and K738. Positions 988–1018 (IECTQHSREDESKMESLDRYSEKTRNGEANP) are disordered.

It belongs to the protein kinase superfamily. Ser/Thr protein kinase family. Testis specific. Expressed only in male germ cells.

It catalyses the reaction L-seryl-[protein] + ATP = O-phospho-L-seryl-[protein] + ADP + H(+). The enzyme catalyses L-threonyl-[protein] + ATP = O-phospho-L-threonyl-[protein] + ADP + H(+). The sequence is that of Serine/threonine-protein kinase 31 (Stk31) from Mus musculus (Mouse).